The sequence spans 134 residues: Putative esterase PA0474 (134 aa).

This sequence belongs to the thioesterase PaaI family.

The sequence is that of Putative esterase PA0474 from Pseudomonas aeruginosa (strain ATCC 15692 / DSM 22644 / CIP 104116 / JCM 14847 / LMG 12228 / 1C / PRS 101 / PAO1).